Consider the following 436-residue polypeptide: UPF0597 protein YhaM (436 aa).

Belongs to the UPF0597 family.

In Escherichia coli O6:H1 (strain CFT073 / ATCC 700928 / UPEC), this protein is UPF0597 protein YhaM.